Consider the following 354-residue polypeptide: Dihydroflavonol 4-reductase (354 aa).

NADP(+) contacts are provided by Lys-44 and Tyr-163.

The protein belongs to the NAD(P)-dependent epimerase/dehydratase family. Dihydroflavonol-4-reductase subfamily.

It carries out the reaction a (2R,3S,4S)-leucoanthocyanidin + NADP(+) = a (2R,3R)-dihydroflavonol + NADPH + H(+). The enzyme catalyses (2S)-flavan-4-ol + NADP(+) = (2S)-flavanone + NADPH + H(+). Its pathway is pigment biosynthesis; anthocyanin biosynthesis. Functionally, bifunctional enzyme involved in flavonoid metabolism. This chain is Dihydroflavonol 4-reductase (ANT18), found in Hordeum vulgare (Barley).